Here is a 333-residue protein sequence, read N- to C-terminus: Tryptophan--tRNA ligase (333 aa).

ATP is bound by residues 11-13 and 19-20; these read QPS and GN. The 'HIGH' region signature appears at 12–20; sequence PSGELTIGN. Asp135 serves as a coordination point for L-tryptophan. ATP-binding positions include 147 to 149, Val186, and 195 to 199; these read GED and KMSKS. A 'KMSKS' region motif is present at residues 195 to 199; that stretch reads KMSKS.

The protein belongs to the class-I aminoacyl-tRNA synthetase family. Homodimer.

The protein localises to the cytoplasm. The enzyme catalyses tRNA(Trp) + L-tryptophan + ATP = L-tryptophyl-tRNA(Trp) + AMP + diphosphate + H(+). Catalyzes the attachment of tryptophan to tRNA(Trp). The polypeptide is Tryptophan--tRNA ligase (Pasteurella multocida (strain Pm70)).